A 399-amino-acid chain; its full sequence is Cytochrome P450 FAS1 (399 aa).

Residue Cys349 coordinates heme.

This sequence belongs to the cytochrome P450 family. Heme is required as a cofactor.

Its subcellular location is the cytoplasm. May be involved in the biosynthesis of cytokinin phytohormones and in host plant fasciation (leafy gall). The protein is Cytochrome P450 FAS1 (fas1) of Rhodococcoides fascians (Rhodococcus fascians).